The primary structure comprises 695 residues: Probable serine/threonine-protein kinase abkD (695 aa).

Polar residues predominate over residues 105–119 (TTKPQPCQAKPPSSK). The interval 105–149 (TTKPQPCQAKPPSSKQQQQQQQQQQQQQQQQQQQQSKKKTSKDRL) is disordered. The stretch at 118–150 (SKQQQQQQQQQQQQQQQQQQQQSKKKTSKDRLR) forms a coiled coil. Over residues 120–139 (QQQQQQQQQQQQQQQQQQQQ) the composition is skewed to low complexity. Residues 177–193 (TIASILAAIALIIYSYE) form a helical membrane-spanning segment. One can recognise a Protein kinase domain in the interval 317 to 695 (DFDRLPIAAA…LIKDQMKKLG (379 aa)). ATP is bound by residues 323 to 331 (IAAASLAQV) and Lys-345. Asp-477 (proton acceptor) is an active-site residue.

Belongs to the protein kinase superfamily. ADCK protein kinase family.

The protein resides in the membrane. The protein is Probable serine/threonine-protein kinase abkD (abkD) of Dictyostelium discoideum (Social amoeba).